The following is a 125-amino-acid chain: Small ribosomal subunit protein uS12 (125 aa).

The segment at 1 to 27 (MPTINQLVRKGREKGEQKSTAPALKSC) is disordered. Asp-89 is subject to 3-methylthioaspartic acid. Positions 103–125 (DASGVQKRNQGRSKYGTKRPKKK) are disordered. A compositionally biased stretch (basic residues) spans 111–125 (NQGRSKYGTKRPKKK).

This sequence belongs to the universal ribosomal protein uS12 family. As to quaternary structure, part of the 30S ribosomal subunit. Contacts proteins S8 and S17. May interact with IF1 in the 30S initiation complex.

In terms of biological role, with S4 and S5 plays an important role in translational accuracy. Interacts with and stabilizes bases of the 16S rRNA that are involved in tRNA selection in the A site and with the mRNA backbone. Located at the interface of the 30S and 50S subunits, it traverses the body of the 30S subunit contacting proteins on the other side and probably holding the rRNA structure together. The combined cluster of proteins S8, S12 and S17 appears to hold together the shoulder and platform of the 30S subunit. In Syntrophomonas wolfei subsp. wolfei (strain DSM 2245B / Goettingen), this protein is Small ribosomal subunit protein uS12.